Here is a 477-residue protein sequence, read N- to C-terminus: MNFETTVGLEVHIEMQTNSKAYSPSPVQYGAEQNTNTNVIDWGYPGVLPEINKGALEFGMRAALALHCDITQDVGFDRKNYFYPDNPKAYQITQARTPIGTNGWLEIELEDGTKKKIGIREMHVEEDAGKNTHNPDGYSYVDLNRQGTPLIEIVAEPDISSADEAYAYLTKLRQVIQFTGISDVKMEEGSMRADVNVSIAPIGSDKLGVRTEMKNLNSFEHVRKGIQYEVKRQERLLMSGGEVEQETRRFDEPSGETILMRSKEEANDYRYFPEPDLPPIHISDDWIEEVRASIPEMPDKRRERYTQDWGIPAYDAGVLTQTKEMSDFYDATVAAGAGPKLAANWLMGEVNAYLNSKQVELSDTALTPEHLATMIKLIEDETISSKIAKKVFKEIITNDTEPKAWVESKGMVQLSDPAKLQPIIDEVLDNNEQSIEDFKNGKDRAIGFLVGQIMKKTRGMANPKMVNKLLMASLKER.

Belongs to the GatB/GatE family. GatB subfamily. In terms of assembly, heterotrimer of A, B and C subunits.

It carries out the reaction L-glutamyl-tRNA(Gln) + L-glutamine + ATP + H2O = L-glutaminyl-tRNA(Gln) + L-glutamate + ADP + phosphate + H(+). The catalysed reaction is L-aspartyl-tRNA(Asn) + L-glutamine + ATP + H2O = L-asparaginyl-tRNA(Asn) + L-glutamate + ADP + phosphate + 2 H(+). Allows the formation of correctly charged Asn-tRNA(Asn) or Gln-tRNA(Gln) through the transamidation of misacylated Asp-tRNA(Asn) or Glu-tRNA(Gln) in organisms which lack either or both of asparaginyl-tRNA or glutaminyl-tRNA synthetases. The reaction takes place in the presence of glutamine and ATP through an activated phospho-Asp-tRNA(Asn) or phospho-Glu-tRNA(Gln). This is Aspartyl/glutamyl-tRNA(Asn/Gln) amidotransferase subunit B from Ligilactobacillus salivarius (strain UCC118) (Lactobacillus salivarius).